The primary structure comprises 252 residues: Protein HEAT-INDUCED TAS1 TARGET 2 (252 aa).

Belongs to the heat induced plant HTT protein family. Expressed ubiquitously, including in seedlings, leaves, stems, inflorescences and siliques.

It localises to the cytoplasm. The protein localises to the nucleus. Its function is as follows. Mediates both basal and acquired thermotolerance via HSFA1s-directed pathways (e.g. HSFA1A, HSFA1B, and HSFA1D). Triggers the expression of HSFA1A and HSFA1B. This chain is Protein HEAT-INDUCED TAS1 TARGET 2, found in Arabidopsis thaliana (Mouse-ear cress).